The following is a 239-amino-acid chain: Ribose-5-phosphate isomerase A (239 aa).

Substrate contacts are provided by residues 40–43, 96–99, and 110–113; these read SGST, DGAD, and KGGG. E119 (proton acceptor) is an active-site residue. K137 contacts substrate.

This sequence belongs to the ribose 5-phosphate isomerase family. In terms of assembly, homodimer.

The enzyme catalyses aldehydo-D-ribose 5-phosphate = D-ribulose 5-phosphate. It functions in the pathway carbohydrate degradation; pentose phosphate pathway; D-ribose 5-phosphate from D-ribulose 5-phosphate (non-oxidative stage): step 1/1. Functionally, catalyzes the reversible conversion of ribose-5-phosphate to ribulose 5-phosphate. This is Ribose-5-phosphate isomerase A from Methanococcus maripaludis (strain C7 / ATCC BAA-1331).